The sequence spans 374 residues: GTPase Obg (374 aa).

The region spanning Met-1–Leu-159 is the Obg domain. The OBG-type G domain occupies Ala-160–Pro-333. Residues Gly-166–Ser-173, Phe-191–Tyr-195, Asp-213–Gly-216, Asn-283–Asp-286, and Ser-314–Ala-316 each bind GTP. Ser-173 and Thr-193 together coordinate Mg(2+). Positions Pro-337–Val-374 are disordered. Positions Trp-360–Val-374 are enriched in acidic residues.

Belongs to the TRAFAC class OBG-HflX-like GTPase superfamily. OBG GTPase family. As to quaternary structure, monomer. Requires Mg(2+) as cofactor.

The protein resides in the cytoplasm. In terms of biological role, an essential GTPase which binds GTP, GDP and possibly (p)ppGpp with moderate affinity, with high nucleotide exchange rates and a fairly low GTP hydrolysis rate. Plays a role in control of the cell cycle, stress response, ribosome biogenesis and in those bacteria that undergo differentiation, in morphogenesis control. This Acidithiobacillus ferrooxidans (strain ATCC 23270 / DSM 14882 / CIP 104768 / NCIMB 8455) (Ferrobacillus ferrooxidans (strain ATCC 23270)) protein is GTPase Obg.